Consider the following 143-residue polypeptide: Large ribosomal subunit protein uL13 (143 aa).

It belongs to the universal ribosomal protein uL13 family. As to quaternary structure, part of the 50S ribosomal subunit.

Functionally, this protein is one of the early assembly proteins of the 50S ribosomal subunit, although it is not seen to bind rRNA by itself. It is important during the early stages of 50S assembly. The protein is Large ribosomal subunit protein uL13 of Natranaerobius thermophilus (strain ATCC BAA-1301 / DSM 18059 / JW/NM-WN-LF).